The following is a 128-amino-acid chain: uncharacterized protein (128 aa).

Positions 1 to 126 constitute a VOC domain; sequence MHHIELYVSD…DRIKVELVAP (126 aa).

This is an uncharacterized protein from Bacillus subtilis (strain 168).